A 281-amino-acid polypeptide reads, in one-letter code: 2-dehydro-3-deoxyphosphooctonate aldolase 1 (281 aa).

Belongs to the KdsA family.

Its subcellular location is the cytoplasm. It catalyses the reaction D-arabinose 5-phosphate + phosphoenolpyruvate + H2O = 3-deoxy-alpha-D-manno-2-octulosonate-8-phosphate + phosphate. It participates in carbohydrate biosynthesis; 3-deoxy-D-manno-octulosonate biosynthesis; 3-deoxy-D-manno-octulosonate from D-ribulose 5-phosphate: step 2/3. The protein operates within bacterial outer membrane biogenesis; lipopolysaccharide biosynthesis. In Pseudomonas putida (strain ATCC 47054 / DSM 6125 / CFBP 8728 / NCIMB 11950 / KT2440), this protein is 2-dehydro-3-deoxyphosphooctonate aldolase 1 (kdsA1).